A 144-amino-acid polypeptide reads, in one-letter code: L-fucose mutarotase (144 aa).

The active-site Proton donor is His22. Residues Asp30, Arg109, and 131-133 contribute to the substrate site; that span reads YGN.

This sequence belongs to the RbsD / FucU family. FucU mutarotase subfamily. As to quaternary structure, homodecamer.

The protein resides in the cytoplasm. It carries out the reaction alpha-L-fucose = beta-L-fucose. The protein operates within carbohydrate metabolism; L-fucose metabolism. Involved in the anomeric conversion of L-fucose. This is L-fucose mutarotase from Histophilus somni (strain 2336) (Haemophilus somnus).